Consider the following 198-residue polypeptide: NADH-quinone oxidoreductase subunit C (198 aa).

It belongs to the complex I 30 kDa subunit family. As to quaternary structure, NDH-1 is composed of 14 different subunits. Subunits NuoB, C, D, E, F, and G constitute the peripheral sector of the complex.

The protein localises to the cell inner membrane. The enzyme catalyses a quinone + NADH + 5 H(+)(in) = a quinol + NAD(+) + 4 H(+)(out). In terms of biological role, NDH-1 shuttles electrons from NADH, via FMN and iron-sulfur (Fe-S) centers, to quinones in the respiratory chain. The immediate electron acceptor for the enzyme in this species is believed to be ubiquinone. Couples the redox reaction to proton translocation (for every two electrons transferred, four hydrogen ions are translocated across the cytoplasmic membrane), and thus conserves the redox energy in a proton gradient. The polypeptide is NADH-quinone oxidoreductase subunit C (Herminiimonas arsenicoxydans).